Reading from the N-terminus, the 146-residue chain is Early E3 16 kDa glycoprotein (146 aa).

Asn-51 and Asn-84 each carry an N-linked (GlcNAc...) asparagine; by host glycan.

E3 proteins seem to be dispensable for virus growth in tissue culture cells. They are potentially important for virus growth under special conditions; E3 region may help adenoviruses to evade the immune surveillance of the host. The sequence is that of Early E3 16 kDa glycoprotein from Human adenovirus B serotype 3 (HAdV-3).